Consider the following 206-residue polypeptide: ATP phosphoribosyltransferase (206 aa).

The protein belongs to the ATP phosphoribosyltransferase family. Short subfamily. Heteromultimer composed of HisG and HisZ subunits.

The protein localises to the cytoplasm. The enzyme catalyses 1-(5-phospho-beta-D-ribosyl)-ATP + diphosphate = 5-phospho-alpha-D-ribose 1-diphosphate + ATP. It participates in amino-acid biosynthesis; L-histidine biosynthesis; L-histidine from 5-phospho-alpha-D-ribose 1-diphosphate: step 1/9. Its function is as follows. Catalyzes the condensation of ATP and 5-phosphoribose 1-diphosphate to form N'-(5'-phosphoribosyl)-ATP (PR-ATP). Has a crucial role in the pathway because the rate of histidine biosynthesis seems to be controlled primarily by regulation of HisG enzymatic activity. The chain is ATP phosphoribosyltransferase from Leptospira interrogans serogroup Icterohaemorrhagiae serovar copenhageni (strain Fiocruz L1-130).